Reading from the N-terminus, the 347-residue chain is Protein RecA (347 aa).

Position 67-74 (67-74 (GPESSGKT)) interacts with ATP. The segment at 327–347 (ALGLSSPTPKENGKEKGKAKP) is disordered. The span at 337 to 347 (ENGKEKGKAKP) shows a compositional bias: basic and acidic residues.

The protein belongs to the RecA family.

The protein localises to the cytoplasm. Can catalyze the hydrolysis of ATP in the presence of single-stranded DNA, the ATP-dependent uptake of single-stranded DNA by duplex DNA, and the ATP-dependent hybridization of homologous single-stranded DNAs. It interacts with LexA causing its activation and leading to its autocatalytic cleavage. The chain is Protein RecA from Desulforapulum autotrophicum (strain ATCC 43914 / DSM 3382 / VKM B-1955 / HRM2) (Desulfobacterium autotrophicum).